Reading from the N-terminus, the 222-residue chain is Eukaryotic translation initiation factor 3 subunit K (222 aa).

Residues 46–208 (YDLEANLAVL…KIKTKNITEK (163 aa)) form the PCI domain.

Belongs to the eIF-3 subunit K family. As to quaternary structure, component of the eukaryotic translation initiation factor 3 (eIF-3) complex. The eIF-3 complex interacts with pix.

Its subcellular location is the cytoplasm. In terms of biological role, component of the eukaryotic translation initiation factor 3 (eIF-3) complex, which is involved in protein synthesis of a specialized repertoire of mRNAs and, together with other initiation factors, stimulates binding of mRNA and methionyl-tRNAi to the 40S ribosome. The eIF-3 complex specifically targets and initiates translation of a subset of mRNAs involved in cell proliferation. This Drosophila persimilis (Fruit fly) protein is Eukaryotic translation initiation factor 3 subunit K.